Consider the following 359-residue polypeptide: Lipopolysaccharide 1,6-galactosyltransferase (359 aa).

Residues glutamine 244 and glutamate 276 each contribute to the UDP site.

The protein belongs to the glycosyltransferase group 1 family. Glycosyltransferase 4 subfamily.

It carries out the reaction alpha-D-Glc-(1-&gt;3)-[L-alpha-D-Hep-(1-&gt;7)]-4-O-PO3(2-)-L-alpha-D-Hep-(1-&gt;3)-4-O-PO3(2-)-L-alpha-D-Hep-(1-&gt;5)-[alpha-Kdo-(2-&gt;4)]-alpha-Kdo-(2-&gt;6)-lipid A + UDP-alpha-D-galactose = alpha-D-Gal-(1-&gt;6)-alpha-D-Glc-(1-&gt;3)-[L-alpha-D-Hep-(1-&gt;7)]-4-O-PO3(2-)-L-alpha-D-Hep-(1-&gt;3)-4-O-PO3(2-)-L-alpha-D-Hep-(1-&gt;5)-[alpha-Kdo-(2-&gt;4)]-alpha-Kdo-(2-&gt;6)-lipid A + UDP + H(+). It participates in bacterial outer membrane biogenesis; LPS core biosynthesis. Functionally, galactosyltransferase involved in the biosynthesis of the core oligosaccharide region of lipopolysaccharide (LPS). Catalyzes the addition of galactose from UDP-galactose to the first glucose residue of the LPS outer core. This chain is Lipopolysaccharide 1,6-galactosyltransferase, found in Salmonella typhimurium (strain LT2 / SGSC1412 / ATCC 700720).